The primary structure comprises 448 residues: Argininosuccinate synthase (448 aa).

Residues 17 to 25 and A43 contribute to the ATP site; that span reads AFSGGLDTS. Y99 contacts L-citrulline. Residues G129 and T131 each contribute to the ATP site. Residues T131, N135, and D136 each contribute to the L-aspartate site. N135 is a binding site for L-citrulline. Position 136 (D136) interacts with ATP. Residues R139 and S192 each coordinate L-citrulline. D194 provides a ligand contact to ATP. Residues T201, E203, and E280 each coordinate L-citrulline.

The protein belongs to the argininosuccinate synthase family. Type 2 subfamily. In terms of assembly, homotetramer.

Its subcellular location is the cytoplasm. The enzyme catalyses L-citrulline + L-aspartate + ATP = 2-(N(omega)-L-arginino)succinate + AMP + diphosphate + H(+). The protein operates within amino-acid biosynthesis; L-arginine biosynthesis; L-arginine from L-ornithine and carbamoyl phosphate: step 2/3. This is Argininosuccinate synthase from Bradyrhizobium sp. (strain ORS 278).